The following is a 418-amino-acid chain: Tyrosine--tRNA ligase (418 aa).

An L-tyrosine-binding site is contributed by Y34. The 'HIGH' region signature appears at 39-48; that stretch reads PTADSLHLGH. The L-tyrosine site is built by Y169 and Q173. Positions 229-233 match the 'KMSKS' region motif; that stretch reads KFGKS. K232 contacts ATP. Positions 352–410 constitute an S4 RNA-binding domain; it reads LNIVELLVTSGIVNSKRQAREDVQNGAIYVNGERVQDLDYTLSDSDKIDGELTVIRRGK.

Belongs to the class-I aminoacyl-tRNA synthetase family. TyrS type 1 subfamily. As to quaternary structure, homodimer.

Its subcellular location is the cytoplasm. The enzyme catalyses tRNA(Tyr) + L-tyrosine + ATP = L-tyrosyl-tRNA(Tyr) + AMP + diphosphate + H(+). Catalyzes the attachment of tyrosine to tRNA(Tyr) in a two-step reaction: tyrosine is first activated by ATP to form Tyr-AMP and then transferred to the acceptor end of tRNA(Tyr). In Streptococcus suis (strain 98HAH33), this protein is Tyrosine--tRNA ligase.